The following is a 1094-amino-acid chain: Protein transport protein Sec24C (1094 aa).

The interval 1–338 (MNVNQSVPPV…PIQVIEDDRN (338 aa)) is disordered. Positions 8–19 (PPVPPFGQPQPI) are enriched in pro residues. Composition is skewed to low complexity over residues 20–29 (YPGYHQSSYG) and 60–77 (SRAP…AQAP). Polar residues predominate over residues 90–101 (DVQNGPSSTVQM). Residues 123–132 (VLQPYGPPPT) are compositionally biased toward pro residues. Composition is skewed to polar residues over residues 133 to 144 (SAQVATQLSGMQ), 165 to 175 (SLASASGSFPN), 189 to 215 (PLSQ…SFTP), and 240 to 251 (SVSQPNHVSSPP). At Thr214 the chain carries Phosphothreonine. The segment covering 273-282 (PQQPGYQPQQ) has biased composition (low complexity). Zn(2+) is bound by residues Cys425, Cys428, Cys447, and Cys450. A zinc finger-like region spans residues 425-450 (CNRCKAYMCPFMQFIEGGRRFQCCFC). The Gelsolin-like repeat unit spans residues 962-1034 (TTEPPAVRAS…DNPLSKKVRG (73 aa)).

Belongs to the SEC23/SEC24 family. SEC24 subfamily. In terms of assembly, COPII is composed of at least five proteins: the Sec23/24 complex, the Sec13/31 complex and Sar1. Interacts with TMED2 and TMED10. Interacts with GOSR2 (via IxM motif) and STX5 (via IxM motif); recruits GOSR2 and STX5 into COPII-coated vesicles. Interacts with DDHD1. Interacts with STING1; promoting STING1 translocation to the COPII vesicles. In terms of tissue distribution, ubiquitous.

The protein resides in the cytoplasmic vesicle. The protein localises to the COPII-coated vesicle membrane. It is found in the endoplasmic reticulum membrane. It localises to the cytoplasm. Its subcellular location is the cytosol. Functionally, component of the coat protein complex II (COPII) which promotes the formation of transport vesicles from the endoplasmic reticulum (ER). The coat has two main functions, the physical deformation of the endoplasmic reticulum membrane into vesicles and the selection of cargo molecules for their transport to the Golgi complex. Plays a central role in cargo selection within the COPII complex and together with SEC24D may have a different specificity compared to SEC24A and SEC24B. May more specifically package GPI-anchored proteins through the cargo receptor TMED10. May also be specific for IxM motif-containing cargos like the SNAREs GOSR2 and STX5. This is Protein transport protein Sec24C from Homo sapiens (Human).